The following is a 144-amino-acid chain: D-aminoacyl-tRNA deacylase (144 aa).

Positions 136–137 (GP) match the Gly-cisPro motif, important for rejection of L-amino acids motif.

It belongs to the DTD family. Homodimer.

It is found in the cytoplasm. It carries out the reaction glycyl-tRNA(Ala) + H2O = tRNA(Ala) + glycine + H(+). It catalyses the reaction a D-aminoacyl-tRNA + H2O = a tRNA + a D-alpha-amino acid + H(+). Functionally, an aminoacyl-tRNA editing enzyme that deacylates mischarged D-aminoacyl-tRNAs. Also deacylates mischarged glycyl-tRNA(Ala), protecting cells against glycine mischarging by AlaRS. Acts via tRNA-based rather than protein-based catalysis; rejects L-amino acids rather than detecting D-amino acids in the active site. By recycling D-aminoacyl-tRNA to D-amino acids and free tRNA molecules, this enzyme counteracts the toxicity associated with the formation of D-aminoacyl-tRNA entities in vivo and helps enforce protein L-homochirality. This chain is D-aminoacyl-tRNA deacylase, found in Aliivibrio salmonicida (strain LFI1238) (Vibrio salmonicida (strain LFI1238)).